A 712-amino-acid polypeptide reads, in one-letter code: Serrate RNA effector molecule homolog (712 aa).

Disordered stretches follow at residues 1-80 (MVDS…DSIY), 214-256 (ADIK…TEKS), and 620-712 (QRPV…DDIP). Composition is skewed to basic and acidic residues over residues 8–26 (GDRRRDKFARERRDEDYRR) and 34–54 (YDNKRPGGRRDDYQVKRSRGD). The segment covering 65-79 (RSGNGSDLPTESDSI) has biased composition (polar residues). Residues 214–236 (ADIKKDENGNGTEQPKEEPEVKQ) show a composition bias toward basic and acidic residues. A compositionally biased stretch (acidic residues) spans 240-251 (ATEELEEGAIED). 2 stretches are compositionally biased toward basic and acidic residues: residues 621 to 637 (RPVDCEPKQAPRDDHRG) and 645 to 655 (GYGRERDDDRG). The segment covering 656 to 668 (PGGGGRNSFGGGG) has biased composition (gly residues).

This sequence belongs to the ARS2 family.

It is found in the nucleus. Its function is as follows. Acts as a mediator between the cap-binding complex (CBC) and the primary microRNAs (miRNAs) processing machinery. Contributes to the stability and delivery of capped primary miRNA transcripts to the primary miRNA processing complex, thereby playing a role in RNA-mediated gene silencing (RNAi) by miRNAs. This is Serrate RNA effector molecule homolog from Caenorhabditis elegans.